Consider the following 986-residue polypeptide: Zinc finger protein 445 (986 aa).

Residues 52–134 (RQLFRQLRYH…ALLEELQRDL (83 aa)) enclose the SCAN box domain. The KRAB domain occupies 219–289 (LTFQDVEVTF…NICTVQLKRD (71 aa)). Glycyl lysine isopeptide (Lys-Gly) (interchain with G-Cter in SUMO2) cross-links involve residues K302, K360, and K385. Residues 433-460 (QNTGLKENGKDRYGETSRKSWHAHPEHR) form a disordered region. Residues 439 to 460 (ENGKDRYGETSRKSWHAHPEHR) are compositionally biased toward basic and acidic residues. 2 C2H2-type zinc fingers span residues 470–492 (FQCR…EKIH) and 498–520 (YQCS…QKTH). K524 participates in a covalent cross-link: Glycyl lysine isopeptide (Lys-Gly) (interchain with G-Cter in SUMO2). C2H2-type zinc fingers lie at residues 553–575 (LHCN…QRIH) and 581–604 (YKCT…KLHH). A Glycyl lysine isopeptide (Lys-Gly) (interchain with G-Cter in SUMO2) cross-link involves residue K609. 2 C2H2-type zinc fingers span residues 634–656 (FPCQ…QRIH) and 662–686 (YQCS…RTQH). Residue K691 forms a Glycyl lysine isopeptide (Lys-Gly) (interchain with G-Cter in SUMO2) linkage. C2H2-type zinc fingers lie at residues 718-740 (NKCK…ERVH), 746-768 (YQCR…QRKH), 796-818 (FWCQ…KGIH), and 824-846 (FKCN…QRIH). K929 participates in a covalent cross-link: Glycyl lysine isopeptide (Lys-Gly) (interchain with G-Cter in SUMO2). 2 C2H2-type zinc fingers span residues 933-955 (HKCS…KRCH) and 961-983 (FKCI…MKNH).

This sequence belongs to the krueppel C2H2-type zinc-finger protein family.

It is found in the nucleus. Its function is as follows. Transcription regulator required to maintain maternal and paternal gene imprinting, a process by which gene expression is restricted in a parent of origin-specific manner by epigenetic modification of genomic DNA and chromatin, including DNA methylation. Acts by controlling DNA methylation during the earliest multicellular stages of development at multiple imprinting control regions (ICRs). Acts together with ZFP57, but ZFP57 plays the predominant role in imprinting maintenance. In contrast, ZNF445 seems to be the major factor in human early embryonic imprinting maintenance. This is Zinc finger protein 445 (Znf445) from Mus musculus (Mouse).